We begin with the raw amino-acid sequence, 203 residues long: MTVKEKKIIDQYVPIVVESTGRYERAYDIFSRLLKDRIVFLGSPIDDYVANLVIAQLLFLEAEDPDKDVYLYINSPGGSVTAGLAIYDTMQYIKCDVSTICVGQAASMAAVLLAAGAKGKRYALPNARIMIHQPLGGAEGPAKDVEIITRELLRIKDLLNRILSKHTGQPIEKIEKDTDRDFFMSAEEAKEYGIVDKVVSTRE.

Ser107 acts as the Nucleophile in catalysis. Residue His132 is part of the active site.

This sequence belongs to the peptidase S14 family. Fourteen ClpP subunits assemble into 2 heptameric rings which stack back to back to give a disk-like structure with a central cavity, resembling the structure of eukaryotic proteasomes.

The protein resides in the cytoplasm. It catalyses the reaction Hydrolysis of proteins to small peptides in the presence of ATP and magnesium. alpha-casein is the usual test substrate. In the absence of ATP, only oligopeptides shorter than five residues are hydrolyzed (such as succinyl-Leu-Tyr-|-NHMec, and Leu-Tyr-Leu-|-Tyr-Trp, in which cleavage of the -Tyr-|-Leu- and -Tyr-|-Trp bonds also occurs).. In terms of biological role, cleaves peptides in various proteins in a process that requires ATP hydrolysis. Has a chymotrypsin-like activity. Plays a major role in the degradation of misfolded proteins. The chain is ATP-dependent Clp protease proteolytic subunit from Thermotoga maritima (strain ATCC 43589 / DSM 3109 / JCM 10099 / NBRC 100826 / MSB8).